The following is a 255-amino-acid chain: Enkurin (255 aa).

Residues 1–10 show a composition bias toward polar residues; that stretch reads MDSPCTSESI. Disordered stretches follow at residues 1 to 25 and 67 to 96; these read MDSP…PQHP and SKEK…DHPV. Residues 73–83 show a composition bias toward basic residues; it reads PPKKKFNRCSP. An SH3-binding motif is present at residues 83–89; it reads PKKPAVP. The 93-residue stretch at 160–252 folds into the Enkurin domain; that stretch reads KRNEDVKKAQ…VIEKHKIIYI (93 aa). The tract at residues 160-255 is interaction with TRPC proteins; the sequence is KRNEDVKKAQ…KHKIIYIANK (96 aa). The IQ domain maps to 176 to 187; the sequence is IQENLKKAAMKR.

In terms of assembly, microtubule inner protein component of sperm flagellar doublet microtubules. Binds calmodulin via its IQ domain. Interacts with TRPC1, TRPC2, TRPC5, but not TRPC3. Interacts with CFAP45. High expression in testis and vomeronasal organ and lower expression in ovary, heart, lung, and brain. Not expressed in other tissues.

It is found in the cytoplasm. It localises to the cytoskeleton. The protein resides in the cilium axoneme. The protein localises to the flagellum axoneme. Functionally, adapter that functions to localize a calcium-sensitive signal transduction machinery in sperm to a calcium-permeable ion channel. Microtubule inner protein (MIP) part of the dynein-decorated doublet microtubules (DMTs) in cilia axoneme, which is required for motile cilia beating. The polypeptide is Enkurin (Enkur) (Mus musculus (Mouse)).